Here is a 188-residue protein sequence, read N- to C-terminus: Mediator of RNA polymerase II transcription subunit 29 (188 aa).

The span at 1–11 (MAMLLNQSQPP) shows a compositional bias: polar residues. The interval 1 to 27 (MAMLLNQSQPPQGREGGGTQVGSLGPG) is disordered.

The protein belongs to the Mediator complex subunit 29 family. As to quaternary structure, component of the Mediator complex.

It is found in the nucleus. Its function is as follows. Component of the Mediator complex, a coactivator involved in the regulated transcription of nearly all RNA polymerase II-dependent genes. Mediator functions as a bridge to convey information from gene-specific regulatory proteins to the basal RNA polymerase II transcription machinery. Mediator is recruited to promoters by direct interactions with regulatory proteins and serves as a scaffold for the assembly of a functional preinitiation complex with RNA polymerase II and the general transcription factors. The chain is Mediator of RNA polymerase II transcription subunit 29 (med29) from Xenopus tropicalis (Western clawed frog).